We begin with the raw amino-acid sequence, 606 residues long: Preterminal protein (606 aa).

Residues 320–329 carry the Nuclear localization signal motif; that stretch reads RLPVRRRRRR. O-(5'-phospho-DNA)-serine is present on Ser-515. Residues 573 to 606 are disordered; it reads HLPLPERQADIPLPPLPAGPEPPLPPGARPRRRF. Residues 584–600 are compositionally biased toward pro residues; the sequence is PLPPLPAGPEPPLPPGA.

Belongs to the adenoviridae terminal protein family. As to quaternary structure, heterodimer with the polymerase; this heterodimer binds to bp 9 to 18 of the genome. Interacts with host POU2F1; POU2F1 binds to the auxiliary sequences in the inverted terminal repeats and tethers the pTP-POL heterodimer to the origin DNA thereby participating in the assembly of the pre-initiation complex (POL-TP-DBP-NFIA-POU2F1). Post-translationally, preterminal protein is used to replicate viral genome, upon genomic encapsidation it is processed first into iTP and finally into TP by adenovirus protease.

It localises to the host nucleus matrix. Its function is as follows. Protein covalently bound to the viral DNA that acts as a primer for viral genomic replication by DNA strand displacement. Assembles on the viral origin of replication in an initiation complex with viral polymerase, DBP, host NFIA and host POU2F1/OCT1. During initiation, the polymerase covalently couples the first dCTP with Ser-580 of pTP. The terminal protein stimulates the template activity over 20 fold compared to protein-free templates. Neo-synthesized viral genomes are linked to two preterminal proteins, one for each 5' end. These new genomes are encapsidated in the nucleus, and during capsid maturation by viral protease, preterminal protein is first cleaved into intermediary (iTP), then into mature TP. May play a role in host nuclear matrix localization of genomic DNA. The protein is Preterminal protein of Human adenovirus A serotype 12 (HAdV-12).